Here is a 420-residue protein sequence, read N- to C-terminus: Subtilisin (420 aa).

The N-terminal stretch at Met1–Ala31 is a signal peptide. Positions Ala32 to Met111 are excised as a propeptide. Residue Gln115 participates in Ca(2+) binding. Residues Pro118–Gln420 enclose the Peptidase S8 domain. Residue Asp145 is the Charge relay system of the active site. A Ca(2+)-binding site is contributed by Asp154. Catalysis depends on charge relay system residues His182 and Ser360.

Belongs to the peptidase S8 family. Ca(2+) is required as a cofactor.

It is found in the secreted. The catalysed reaction is Hydrolysis of proteins with broad specificity for peptide bonds, and a preference for a large uncharged residue in P1. Hydrolyzes peptide amides.. Its function is as follows. Subtilisin is an extracellular alkaline serine protease, it catalyzes the hydrolysis of proteins and peptide amides. The chain is Subtilisin (sub1) from Bacillus sp. (strain TA39).